An 802-amino-acid chain; its full sequence is Phenylalanine--tRNA ligase beta subunit (802 aa).

The region spanning 38-149 (KSSLKPFVIA…ADAPVGTSFA (112 aa)) is the tRNA-binding domain. In terms of domain architecture, B5 spans 399-474 (HKPKIVSFPI…RIHGVDNIAP (76 aa)). Positions 452, 458, 461, and 462 each coordinate Mg(2+). The FDX-ACB domain occupies 708-801 (SAFQAVKRDF…VGKQTGGVLR (94 aa)).

This sequence belongs to the phenylalanyl-tRNA synthetase beta subunit family. Type 1 subfamily. Tetramer of two alpha and two beta subunits. The cofactor is Mg(2+).

It is found in the cytoplasm. It carries out the reaction tRNA(Phe) + L-phenylalanine + ATP = L-phenylalanyl-tRNA(Phe) + AMP + diphosphate + H(+). In Mesorhizobium japonicum (strain LMG 29417 / CECT 9101 / MAFF 303099) (Mesorhizobium loti (strain MAFF 303099)), this protein is Phenylalanine--tRNA ligase beta subunit.